The primary structure comprises 243 residues: MNNIFGFFKSSNNTQSASGGKQNQENIKSANPLKISQNWYEERSDKLIVQRNLLIILIILLTIFMVISTLVIAFVVKSKQFDPFVIQLNSNTGRAAVVEPISSSMLTVDESLTRYFIKKYITARETYNPVDFATIARTTVRLFSTSAVYYNYLGYIRNKDFDPTLKYKEDNTTFLVIKSWSKIADDKYIVRFSVNETSGSQLVYNKIAVVSYDYVPMQLTDSELDINPVGFQVNGYRVDDDNS.

A helical membrane pass occupies residues 55-75; it reads IILIILLTIFMVISTLVIAFV.

Its subcellular location is the membrane. This is an uncharacterized protein from Rickettsia prowazekii (strain Madrid E).